The chain runs to 248 residues: 2,3-bisphosphoglycerate-dependent phosphoglycerate mutase (248 aa).

Residues 8–15, 21–22, R60, 87–90, K98, 114–115, and 183–184 contribute to the substrate site; these read RHGESTWN, TG, ERHY, RR, and GN. The active-site Tele-phosphohistidine intermediate is H9. E87 (proton donor/acceptor) is an active-site residue.

Belongs to the phosphoglycerate mutase family. BPG-dependent PGAM subfamily.

It carries out the reaction (2R)-2-phosphoglycerate = (2R)-3-phosphoglycerate. The protein operates within carbohydrate degradation; glycolysis; pyruvate from D-glyceraldehyde 3-phosphate: step 3/5. Catalyzes the interconversion of 2-phosphoglycerate and 3-phosphoglycerate. This chain is 2,3-bisphosphoglycerate-dependent phosphoglycerate mutase, found in Solibacter usitatus (strain Ellin6076).